Reading from the N-terminus, the 116-residue chain is Alpha-amylase inhibitor 5 (116 aa).

5 disulfides stabilise this stretch: Cys-4/Cys-55, Cys-18/Cys-44, Cys-27/Cys-77, Cys-45/Cys-95, and Cys-57/Cys-106.

This sequence belongs to the protease inhibitor I6 (cereal trypsin/alpha-amylase inhibitor) family.

It is found in the secreted. In terms of biological role, alpha-amylase inhibitor. The protein is Alpha-amylase inhibitor 5 of Sorghum bicolor (Sorghum).